Reading from the N-terminus, the 1062-residue chain is MPKRTDIHKIMVIGSGPIIIGQAAEFDYSGTQACLALREEGYEVVLVNSNPATIMTDTTIADKVYIEPLTVESISRIIRQEYPDAILPTLGGQVGLNMALSLAKTGILDELNIELLGTRLSSIEQAEDREKFKELCKELGEPVPPSTTVNTVEEALEFGDRIGYPIIVRPAFTMGGTGGGICNNHEELAKIAKNGLELSPVTECLIEKSIAGYKEIEFEVMRDHDDNAMIVCCMENFDPVGIHTGDSIVFSPSQTLSDKEYQMLRDCSLRLIRALKIEGGCNVQLALDPNSFDYDVIEVNPRVSRSSALASKATGYPIAKMAAKIAIGMTLDEIKNPVTRTTYAEFEPALDYVVCKIPRWPFDKFSKADRTLSTQMKATGEVMAIGRTAEEAMQKAVRSLEIDEKDLYSETAHHASDEEIEQKLVKAQDDRLFYLAEAFRRGYSLEDVHELTKINFYFLDIVSHMVEMEKNIQENKDNLETLRLAKKYGFSDATIATLWNESIDQVRDLRKKNGIIPVYKMVDTCAAEFESKTPYFYSTYDGENESHKSGKKSVIVIGSGPIRIGQGVEFDYATVHCVKALQKMGYEAIVINSNPETVSTDFSISDKLYFEPLTLEDVLNVCDLEKPEGVIVQFGGQTSINLAAGLKDHGIKILGTSVKDLNRAEDRELFDQIIKKLKLNQPKGLTATTHEGVIKAAEELGYPVLVRPSYVLGGKAMEIVYNKSELEEYLHDHVDIAADHPILVDDYLDGRECDVDAICDGQDVLLPGIMEHIEHAGVHSGDSMAVYPPQNFTDEVKDKIMDVTRKLALTLNCVGIMNIQFIVRNGEVYVIEVNPRASRTVPFLSKITGIEMAQVATRVIMGESLAQQGYSDGLAPEPEMISVKAPVFSFSKLADVDSYLGPEMKSTGEVMGSDHTFAKALYKAFAGAKMQLPENGNVLLTIEDKDKEKILPIAKRFARIGYRIFATKGTADFLKNNGLHVDLVTKVHESENADDNILNELREGRIDLVINTMGHDIEKNSDGFIIRQMAIQQNVPLLTALDTADALLTSLENRSFATDALK.

A carboxyphosphate synthetic domain region spans residues 1–401 (MPKRTDIHKI…AMQKAVRSLE (401 aa)). ATP is bound by residues arginine 129, arginine 169, glycine 175, glycine 176, lysine 208, isoleucine 210, glutamate 215, glycine 241, isoleucine 242, histidine 243, glutamine 284, and glutamate 298. One can recognise an ATP-grasp 1 domain in the interval 133-327 (KELCKELGEP…IAKMAAKIAI (195 aa)). Mg(2+) is bound by residues glutamine 284, glutamate 298, and asparagine 300. Mn(2+) contacts are provided by glutamine 284, glutamate 298, and asparagine 300. The segment at 402-546 (IDEKDLYSET…YSTYDGENES (145 aa)) is oligomerization domain. The carbamoyl phosphate synthetic domain stretch occupies residues 547 to 929 (HKSGKKSVIV…ALYKAFAGAK (383 aa)). The 191-residue stretch at 671–861 (DQIIKKLKLN…MAQVATRVIM (191 aa)) folds into the ATP-grasp 2 domain. 10 residues coordinate ATP: arginine 707, aspartate 746, leucine 748, glutamate 752, glycine 777, valine 778, histidine 779, serine 780, glutamine 820, and glutamate 832. The Mg(2+) site is built by glutamine 820, glutamate 832, and asparagine 834. Glutamine 820, glutamate 832, and asparagine 834 together coordinate Mn(2+). Residues 930–1062 (MQLPENGNVL…NRSFATDALK (133 aa)) form the MGS-like domain. The interval 930-1062 (MQLPENGNVL…NRSFATDALK (133 aa)) is allosteric domain.

It belongs to the CarB family. As to quaternary structure, composed of two chains; the small (or glutamine) chain promotes the hydrolysis of glutamine to ammonia, which is used by the large (or ammonia) chain to synthesize carbamoyl phosphate. Tetramer of heterodimers (alpha,beta)4. Mg(2+) serves as cofactor. Mn(2+) is required as a cofactor.

The catalysed reaction is hydrogencarbonate + L-glutamine + 2 ATP + H2O = carbamoyl phosphate + L-glutamate + 2 ADP + phosphate + 2 H(+). It catalyses the reaction hydrogencarbonate + NH4(+) + 2 ATP = carbamoyl phosphate + 2 ADP + phosphate + 2 H(+). The protein operates within amino-acid biosynthesis; L-arginine biosynthesis; carbamoyl phosphate from bicarbonate: step 1/1. It participates in pyrimidine metabolism; UMP biosynthesis via de novo pathway; (S)-dihydroorotate from bicarbonate: step 1/3. Large subunit of the glutamine-dependent carbamoyl phosphate synthetase (CPSase). CPSase catalyzes the formation of carbamoyl phosphate from the ammonia moiety of glutamine, carbonate, and phosphate donated by ATP, constituting the first step of 2 biosynthetic pathways, one leading to arginine and/or urea and the other to pyrimidine nucleotides. The large subunit (synthetase) binds the substrates ammonia (free or transferred from glutamine from the small subunit), hydrogencarbonate and ATP and carries out an ATP-coupled ligase reaction, activating hydrogencarbonate by forming carboxy phosphate which reacts with ammonia to form carbamoyl phosphate. In Lactobacillus johnsonii (strain CNCM I-12250 / La1 / NCC 533), this protein is Carbamoyl phosphate synthase large chain.